The primary structure comprises 183 residues: Holliday junction branch migration complex subunit RuvA (183 aa).

Residues 1 to 64 (MIVAIEGIVS…EDSHKLYGFL (64 aa)) form a domain I region. The interval 65-138 (DTNEQRMFEL…SDAKINIENS (74 aa)) is domain II. Position 138 (Ser138) is a region of interest, flexible linker. The interval 138-183 (SNQDHAQALAALLSLGFKQENILKVLRTCESQNTSELIKEALKKLA) is domain III.

It belongs to the RuvA family. In terms of assembly, homotetramer. Forms an RuvA(8)-RuvB(12)-Holliday junction (HJ) complex. HJ DNA is sandwiched between 2 RuvA tetramers; dsDNA enters through RuvA and exits via RuvB. An RuvB hexamer assembles on each DNA strand where it exits the tetramer. Each RuvB hexamer is contacted by two RuvA subunits (via domain III) on 2 adjacent RuvB subunits; this complex drives branch migration. In the full resolvosome a probable DNA-RuvA(4)-RuvB(12)-RuvC(2) complex forms which resolves the HJ.

The protein localises to the cytoplasm. The RuvA-RuvB-RuvC complex processes Holliday junction (HJ) DNA during genetic recombination and DNA repair, while the RuvA-RuvB complex plays an important role in the rescue of blocked DNA replication forks via replication fork reversal (RFR). RuvA specifically binds to HJ cruciform DNA, conferring on it an open structure. The RuvB hexamer acts as an ATP-dependent pump, pulling dsDNA into and through the RuvAB complex. HJ branch migration allows RuvC to scan DNA until it finds its consensus sequence, where it cleaves and resolves the cruciform DNA. The sequence is that of Holliday junction branch migration complex subunit RuvA from Campylobacter lari (strain RM2100 / D67 / ATCC BAA-1060).